We begin with the raw amino-acid sequence, 276 residues long: B3 domain-containing protein REM22 (276 aa).

The TF-B3 DNA-binding region spans 11–115 (SETMSIQDTV…VFHFCVYEYG (105 aa)). Residues 141–164 (GNEESTKGLEESPRRGGTSRRRAK) form a disordered region. Positions 144 to 154 (ESTKGLEESPR) are enriched in basic and acidic residues.

Its subcellular location is the nucleus. The polypeptide is B3 domain-containing protein REM22 (REM22) (Arabidopsis thaliana (Mouse-ear cress)).